A 202-amino-acid polypeptide reads, in one-letter code: Large ribosomal subunit protein bL25 (202 aa).

It belongs to the bacterial ribosomal protein bL25 family. CTC subfamily. In terms of assembly, part of the 50S ribosomal subunit; part of the 5S rRNA/L5/L18/L25 subcomplex. Contacts the 5S rRNA. Binds to the 5S rRNA independently of L5 and L18.

This is one of the proteins that binds to the 5S RNA in the ribosome where it forms part of the central protuberance. In Burkholderia ambifaria (strain MC40-6), this protein is Large ribosomal subunit protein bL25.